A 491-amino-acid chain; its full sequence is Ketol-acid reductoisomerase (NADP(+)) (491 aa).

The 194-residue stretch at 15–208 (AQLGKCRFMG…GGHRAGVLES (194 aa)) folds into the KARI N-terminal Rossmann domain. NADP(+) contacts are provided by residues 45-48 (CGAQ), arginine 68, arginine 76, serine 78, and 108-110 (DKQ). Histidine 132 is an active-site residue. Residue glycine 158 coordinates NADP(+). 2 consecutive KARI C-terminal knotted domains span residues 209 to 344 (SFVA…TAPQ) and 345 to 484 (YEGK…MTDM). Mg(2+) is bound by residues aspartate 217, glutamate 221, glutamate 389, and glutamate 393. Serine 414 contacts substrate.

The protein belongs to the ketol-acid reductoisomerase family. Requires Mg(2+) as cofactor.

The catalysed reaction is (2R)-2,3-dihydroxy-3-methylbutanoate + NADP(+) = (2S)-2-acetolactate + NADPH + H(+). The enzyme catalyses (2R,3R)-2,3-dihydroxy-3-methylpentanoate + NADP(+) = (S)-2-ethyl-2-hydroxy-3-oxobutanoate + NADPH + H(+). Its pathway is amino-acid biosynthesis; L-isoleucine biosynthesis; L-isoleucine from 2-oxobutanoate: step 2/4. The protein operates within amino-acid biosynthesis; L-valine biosynthesis; L-valine from pyruvate: step 2/4. In terms of biological role, involved in the biosynthesis of branched-chain amino acids (BCAA). Catalyzes an alkyl-migration followed by a ketol-acid reduction of (S)-2-acetolactate (S2AL) to yield (R)-2,3-dihydroxy-isovalerate. In the isomerase reaction, S2AL is rearranged via a Mg-dependent methyl migration to produce 3-hydroxy-3-methyl-2-ketobutyrate (HMKB). In the reductase reaction, this 2-ketoacid undergoes a metal-dependent reduction by NADPH to yield (R)-2,3-dihydroxy-isovalerate. In Escherichia coli (strain 55989 / EAEC), this protein is Ketol-acid reductoisomerase (NADP(+)).